The chain runs to 143 residues: Small ribosomal subunit protein uS9 (143 aa).

Positions 124-143 (PEPKKFGGKGARARFQKSYR) are disordered. The segment covering 134–143 (ARARFQKSYR) has biased composition (basic residues).

The protein belongs to the universal ribosomal protein uS9 family.

The chain is Small ribosomal subunit protein uS9 (RPS16) from Candida glabrata (strain ATCC 2001 / BCRC 20586 / JCM 3761 / NBRC 0622 / NRRL Y-65 / CBS 138) (Yeast).